Consider the following 437-residue polypeptide: 2-methylisoborneol synthase (437 aa).

The interval 32 to 125 is disordered; it reads AHDSEATVGG…IPGLYHHPVP (94 aa). A compositionally biased stretch (pro residues) spans 59–73; the sequence is PPSPAAPPTDVPAPE. D194, D195, E199, N342, S346, and E350 together coordinate Mg(2+).

This sequence belongs to the terpene synthase family. 2-methylisoborneol synthase subfamily. Requires Mg(2+) as cofactor.

It carries out the reaction (E)-2-methylgeranyl diphosphate + H2O = 2-methylisoborneol + diphosphate. Functionally, catalyzes the cyclization of 2-methylgeranyl diphosphate (2-MeGPP) to 2-methylisoborneol (2-MIB), which likely involves the intermediacy of 2-methyllinalyl diphosphate. The chain is 2-methylisoborneol synthase from Streptomyces griseus.